We begin with the raw amino-acid sequence, 32 residues long: Dermatoxin-J3 (32 aa).

Residue Gln32 is modified to Glutamine amide.

As to expression, expressed by the skin glands.

It localises to the secreted. Its function is as follows. Antimicrobial peptide. The sequence is that of Dermatoxin-J3 from Phasmahyla jandaia (Jandaia leaf frog).